The sequence spans 155 residues: Ribosome maturation factor RimP (155 aa).

It belongs to the RimP family.

Its subcellular location is the cytoplasm. In terms of biological role, required for maturation of 30S ribosomal subunits. In Agathobacter rectalis (strain ATCC 33656 / DSM 3377 / JCM 17463 / KCTC 5835 / VPI 0990) (Eubacterium rectale), this protein is Ribosome maturation factor RimP.